The primary structure comprises 297 residues: Averufin oxidase stcO (297 aa).

Residues 277 to 297 (VVVLGVCILLLLGGLLYSIKA) form a helical membrane-spanning segment.

Belongs to the avfA family.

The protein resides in the membrane. The protein operates within mycotoxin biosynthesis; sterigmatocystin biosynthesis. Its function is as follows. Averufin oxidase; part of the gene cluster that mediates the biosynthesis of sterigmatocystin (ST), a polyketide-derived furanocoumarin which is part of the most toxic and carcinogenic compounds among the known mycotoxins. The first step in the biosynthesis of sterigmatocystin is the production of hexanoate by the fatty acid synthase (FAS) units stcJ and stcK. The polyketide backbone is assembled by the non-reducing polyketide synthase stcA by condensation of the starter hexanoyl-CoA and 7 malonyl-CoA extender units followed by cyclization and release of norsolorinic acid. Norsolorinic acid is the first stable intermediate in the biosynthesis of sterigmatocystin and is converted into averantin (AVN) by the ketoreductase stcE which reduces the hexanoate ketone to an alcohol. Averantin is then oxidized into 5'-hydroxyaverantin (HAVN) by the cytochrome P450 monooxygenase stcF. 5'-hydroxyaverantin is further converted to 5'-oxyaverantin (OAVN) by the 5'-hydroxyaverantin dehydrogenase stcG. The next step is the conversion of OAVN into averufin (AVF) which is catalyzed by a yet to be identified enzyme. The cytochrome P450 monooxygenase stcB and the flavin-binding monooxygenase stcW are both required for the conversion of averufin to 1-hydroxyversicolorone. The esterase stcI probably catalyzes the formation of versiconal hemiacetal acetate from 1-hydroxyversicolorone. The oxydoreductase stcN then probably catalyzes the biosynthetic step from versiconal to versicolorin B (VERB). The next step is performed by the versicolorin B desaturase stcL to produce versicolorin A (VERA). The ketoreductase stcU and the cytochrome P450 monooxygenase stcS are involved in the conversion of versicolorin A to demethylsterigmatocystin. The Baeyer-Villiger oxidas stcQ and the reductase stcR might be involved in the biosynthetic step from versicolorin A to demethylsterigmatocystin. The final step in the biosynthesis of sterigmatocystin is the methylation of demethylsterigmatocystin catalyzed by the methyltransferase stcP. This chain is Averufin oxidase stcO, found in Emericella nidulans (strain FGSC A4 / ATCC 38163 / CBS 112.46 / NRRL 194 / M139) (Aspergillus nidulans).